The sequence spans 220 residues: Thiamine-phosphate synthase (220 aa).

4-amino-2-methyl-5-(diphosphooxymethyl)pyrimidine-binding positions include 46-50 (QFREK) and asparagine 83. Positions 84 and 103 each coordinate Mg(2+). Serine 122 contributes to the 4-amino-2-methyl-5-(diphosphooxymethyl)pyrimidine binding site. Position 149 to 151 (149 to 151 (TNS)) interacts with 2-[(2R,5Z)-2-carboxy-4-methylthiazol-5(2H)-ylidene]ethyl phosphate. Position 152 (lysine 152) interacts with 4-amino-2-methyl-5-(diphosphooxymethyl)pyrimidine. Residues glycine 181 and 201–202 (IS) each bind 2-[(2R,5Z)-2-carboxy-4-methylthiazol-5(2H)-ylidene]ethyl phosphate.

This sequence belongs to the thiamine-phosphate synthase family. Requires Mg(2+) as cofactor.

The catalysed reaction is 2-[(2R,5Z)-2-carboxy-4-methylthiazol-5(2H)-ylidene]ethyl phosphate + 4-amino-2-methyl-5-(diphosphooxymethyl)pyrimidine + 2 H(+) = thiamine phosphate + CO2 + diphosphate. It catalyses the reaction 2-(2-carboxy-4-methylthiazol-5-yl)ethyl phosphate + 4-amino-2-methyl-5-(diphosphooxymethyl)pyrimidine + 2 H(+) = thiamine phosphate + CO2 + diphosphate. The enzyme catalyses 4-methyl-5-(2-phosphooxyethyl)-thiazole + 4-amino-2-methyl-5-(diphosphooxymethyl)pyrimidine + H(+) = thiamine phosphate + diphosphate. It participates in cofactor biosynthesis; thiamine diphosphate biosynthesis; thiamine phosphate from 4-amino-2-methyl-5-diphosphomethylpyrimidine and 4-methyl-5-(2-phosphoethyl)-thiazole: step 1/1. In terms of biological role, condenses 4-methyl-5-(beta-hydroxyethyl)thiazole monophosphate (THZ-P) and 2-methyl-4-amino-5-hydroxymethyl pyrimidine pyrophosphate (HMP-PP) to form thiamine monophosphate (TMP). This chain is Thiamine-phosphate synthase, found in Mannheimia succiniciproducens (strain KCTC 0769BP / MBEL55E).